Consider the following 106-residue polypeptide: Iron-sulfur cluster assembly protein CyaY (106 aa).

The protein belongs to the frataxin family.

Functionally, involved in iron-sulfur (Fe-S) cluster assembly. May act as a regulator of Fe-S biogenesis. In Cronobacter sakazakii (strain ATCC BAA-894) (Enterobacter sakazakii), this protein is Iron-sulfur cluster assembly protein CyaY.